Here is a 102-residue protein sequence, read N- to C-terminus: MVNPKHHIFVCTSCRLNGKQQGFCYSKNSVEIVETFMEELDSRDLSSEVMVNNTGCFGICSQGPIVVVYPEGVWYGNVTADDVEEIVESHIENGEVVKRLQI.

The [2Fe-2S] cluster site is built by C11, C24, C56, and C60.

It belongs to the 2Fe2S Shethna-type ferredoxin family. [2Fe-2S] cluster is required as a cofactor.

In terms of biological role, ferredoxins are iron-sulfur proteins that transfer electrons in a wide variety of metabolic reactions. The protein is Ferredoxin, 2Fe-2S of Clostridium pasteurianum.